We begin with the raw amino-acid sequence, 204 residues long: uncharacterized protein (204 aa).

A helical membrane pass occupies residues 63–83 (SLLLSMVASVTAAGGNAAIVG).

The protein resides in the membrane. This is an uncharacterized protein from Mycobacterium tuberculosis (strain ATCC 25618 / H37Rv).